Here is a 21-residue protein sequence, read N- to C-terminus: Peptide PGLa-R4 (21 aa).

A Leucine amide modification is found at L21.

Expressed by the skin glands.

It is found in the secreted. Antimicrobial peptide. This is Peptide PGLa-R4 from Xenopus ruwenzoriensis (Uganda clawed frog).